A 204-amino-acid polypeptide reads, in one-letter code: Cobalt-containing nitrile hydratase subunit alpha (204 aa).

4 residues coordinate Co(2+): cysteine 108, cysteine 111, serine 112, and cysteine 113. Cysteine 111 is subject to Cysteine sulfinic acid (-SO2H). Cysteine sulfenic acid (-SOH) is present on cysteine 113.

This sequence belongs to the nitrile hydratase subunit alpha family. As to quaternary structure, heterotetramer of two alpha and two beta chains. Requires Co(2+) as cofactor.

It catalyses the reaction an aliphatic primary amide = an aliphatic nitrile + H2O. Its function is as follows. NHase catalyzes the hydration of various nitrile compounds to the corresponding amides. The chain is Cobalt-containing nitrile hydratase subunit alpha from Pseudonocardia thermophila.